Reading from the N-terminus, the 518-residue chain is Gypsy retrotransposon integrase-like protein 1 (518 aa).

The 163-residue stretch at 130–292 folds into the Integrase catalytic domain; the sequence is QQHLPMVGNP…TPYFQMFNRN (163 aa). Serine 498 carries the post-translational modification Phosphoserine.

The polypeptide is Gypsy retrotransposon integrase-like protein 1 (Gin1) (Mus musculus (Mouse)).